The following is a 160-amino-acid chain: Photosystem II extrinsic protein V (160 aa).

The signal sequence occupies residues 1 to 25; the sequence is MKRFFLVAIASVLFFFNTMVGSANA. Heme c-binding residues include C62, C65, H66, and H117.

Belongs to the cytochrome c family. PsbV subfamily. As to quaternary structure, PSII is composed of 1 copy each of membrane proteins PsbA, PsbB, PsbC, PsbD, PsbE, PsbF, PsbH, PsbI, PsbJ, PsbK, PsbL, PsbM, PsbT, PsbX, PsbY, PsbZ, Psb30/Ycf12, peripheral proteins PsbO, CyanoQ (PsbQ), PsbU, PsbV and a large number of cofactors. It forms dimeric complexes. The cyanobacterial oxygen-evolving complex is composed of PsbO, CyanoQ (PsbQ), PsbV and PsbU. Heme c serves as cofactor.

The protein localises to the cellular thylakoid membrane. One of the extrinsic, lumenal subunits of photosystem II (PSII). PSII is a light-driven water plastoquinone oxidoreductase, using light energy to abstract electrons from H(2)O, generating a proton gradient subsequently used for ATP formation. The extrinsic proteins stabilize the structure of photosystem II oxygen-evolving complex (OEC), the ion environment of oxygen evolution and protect the OEC against heat-induced inactivation. Low-potential cytochrome c that plays a role in the OEC of PSII, required for normal function or stabilization of PSII. This is Photosystem II extrinsic protein V from Synechocystis sp. (strain ATCC 27184 / PCC 6803 / Kazusa).